The chain runs to 635 residues: Threonine--tRNA ligase (635 aa).

Positions 1–144 (MQLLLIHSDY…RTIRLEGAVP (144 aa)) are editing domain. The catalytic stretch occupies residues 215–514 (PHVELMRRLE…AEEGKVPNLP (300 aa)). 3 residues coordinate Zn(2+): Cys-307, His-359, and His-483.

The protein belongs to the class-II aminoacyl-tRNA synthetase family. In terms of assembly, homodimer. Zn(2+) is required as a cofactor.

Its subcellular location is the cytoplasm. The catalysed reaction is tRNA(Thr) + L-threonine + ATP = L-threonyl-tRNA(Thr) + AMP + diphosphate + H(+). Its function is as follows. Catalyzes the attachment of threonine to tRNA(Thr) in a two-step reaction: L-threonine is first activated by ATP to form Thr-AMP and then transferred to the acceptor end of tRNA(Thr). Also edits incorrectly charged L-seryl-tRNA(Thr). The protein is Threonine--tRNA ligase of Methanococcoides burtonii (strain DSM 6242 / NBRC 107633 / OCM 468 / ACE-M).